The primary structure comprises 545 residues: T-complex protein 1 subunit gamma (545 aa).

M1 carries the N-acetylmethionine modification. A disordered region spans residues 1-24 (MMGHRPVLVLSQNTKRESGRKVQS). S11 is modified (phosphoserine). Residue K15 forms a Glycyl lysine isopeptide (Lys-Gly) (interchain with G-Cter in SUMO2) linkage. G42 contributes to the ADP binding site. G42 provides a ligand contact to ATP. D93 contacts Mg(2+). Positions 94, 95, 96, 97, 162, and 163 each coordinate ADP. G94, T95, and T96 together coordinate ATP. S170 is subject to Phosphoserine. K222 carries the N6-acetyllysine modification. 2 positions are modified to phosphoserine: S243 and S244. Y247 is subject to Phosphotyrosine. Residues K248 and K249 each participate in a glycyl lysine isopeptide (Lys-Gly) (interchain with G-Cter in SUMO2) cross-link. A Phosphoserine modification is found at S252. A disulfide bridge connects residues C366 and C372. K381 participates in a covalent cross-link: Glycyl lysine isopeptide (Lys-Gly) (interchain with G-Cter in SUMO2). G411 serves as a coordination point for ADP. G411 is a binding site for ATP. Phosphothreonine occurs at positions 430 and 459. G482, E483, E497, and K502 together coordinate ADP. G482 serves as a coordination point for ATP. E497 contributes to the ATP binding site. Residues 526 to 545 (HKKKGDDQSRQGGAPDAGQE) are disordered.

This sequence belongs to the TCP-1 chaperonin family. In terms of assembly, component of the chaperonin-containing T-complex (TRiC), a hexadecamer composed of two identical back-to-back stacked rings enclosing a protein folding chamber. Each ring is made up of eight different subunits: TCP1/CCT1, CCT2, CCT3, CCT4, CCT5, CCT6A/CCT6, CCT7, CCT8. Interacts with PACRG. Interacts with DNAAF4. Interacts with DLEC1.

Its subcellular location is the cytoplasm. The catalysed reaction is ATP + H2O = ADP + phosphate + H(+). In terms of biological role, component of the chaperonin-containing T-complex (TRiC), a molecular chaperone complex that assists the folding of actin, tubulin and other proteins upon ATP hydrolysis. The TRiC complex mediates the folding of WRAP53/TCAB1, thereby regulating telomere maintenance. As part of the TRiC complex may play a role in the assembly of BBSome, a complex involved in ciliogenesis regulating transports vesicles to the cilia. This Pongo abelii (Sumatran orangutan) protein is T-complex protein 1 subunit gamma (CCT3).